Here is a 74-residue protein sequence, read N- to C-terminus: MTNVYSLDGILVFGLLFVCTCAYFKKVPRLKTWLLSEKKGVWGVFYKAAVIGTRLHAAVAIACVVMAFYVLFIK.

An N-terminal signal peptide occupies residues 1-22 (MTNVYSLDGILVFGLLFVCTCA). The Extracellular segment spans residues 23 to 52 (YFKKVPRLKTWLLSEKKGVWGVFYKAAVIG). A helical transmembrane segment spans residues 53 to 73 (TRLHAAVAIACVVMAFYVLFI). Residue K74 is a topological domain, cytoplasmic.

This sequence belongs to the KISH family.

Its subcellular location is the golgi apparatus membrane. In terms of biological role, involved in the early part of the secretory pathway. The polypeptide is Protein kish-B (TMEM167B) (Homo sapiens (Human)).